The following is a 116-amino-acid chain: uncharacterized protein (116 aa).

A CHY-type zinc finger spans residues 1–72 (MCKHVLNAQV…SDEYCPNCDN (72 aa)). Positions 2, 4, 16, 17, 23, 26, 27, 33, 45, 48, 67, and 70 each coordinate Zn(2+).

It localises to the cytoplasm. This is an uncharacterized protein from Schizosaccharomyces pombe (strain 972 / ATCC 24843) (Fission yeast).